The chain runs to 473 residues: tRNA-2-methylthio-N(6)-dimethylallyladenosine synthase (473 aa).

The MTTase N-terminal domain maps to arginine 5–glutamine 125. Positions 14, 50, 88, 166, 170, and 173 each coordinate [4Fe-4S] cluster. Positions arginine 152–alanine 384 constitute a Radical SAM core domain. One can recognise a TRAM domain in the interval lysine 387 to alanine 459.

Belongs to the methylthiotransferase family. MiaB subfamily. In terms of assembly, monomer. The cofactor is [4Fe-4S] cluster.

It is found in the cytoplasm. The catalysed reaction is N(6)-dimethylallyladenosine(37) in tRNA + (sulfur carrier)-SH + AH2 + 2 S-adenosyl-L-methionine = 2-methylsulfanyl-N(6)-dimethylallyladenosine(37) in tRNA + (sulfur carrier)-H + 5'-deoxyadenosine + L-methionine + A + S-adenosyl-L-homocysteine + 2 H(+). Catalyzes the methylthiolation of N6-(dimethylallyl)adenosine (i(6)A), leading to the formation of 2-methylthio-N6-(dimethylallyl)adenosine (ms(2)i(6)A) at position 37 in tRNAs that read codons beginning with uridine. The protein is tRNA-2-methylthio-N(6)-dimethylallyladenosine synthase of Rhodopseudomonas palustris (strain BisB5).